The sequence spans 210 residues: Uracil phosphoribosyltransferase (210 aa).

Residues arginine 78, arginine 103, and 130-138 (DPMLATGGT) contribute to the 5-phospho-alpha-D-ribose 1-diphosphate site. Uracil-binding positions include isoleucine 193 and 198 to 200 (GDA). Aspartate 199 contributes to the 5-phospho-alpha-D-ribose 1-diphosphate binding site.

It belongs to the UPRTase family. Mg(2+) serves as cofactor.

The catalysed reaction is UMP + diphosphate = 5-phospho-alpha-D-ribose 1-diphosphate + uracil. It participates in pyrimidine metabolism; UMP biosynthesis via salvage pathway; UMP from uracil: step 1/1. With respect to regulation, allosterically activated by GTP. Functionally, catalyzes the conversion of uracil and 5-phospho-alpha-D-ribose 1-diphosphate (PRPP) to UMP and diphosphate. This chain is Uracil phosphoribosyltransferase, found in Xanthomonas axonopodis pv. citri (strain 306).